The following is an 805-amino-acid chain: G-type lectin S-receptor-like serine/threonine-protein kinase SD1-29 (805 aa).

Positions 1–21 (MGMVLFACLLLLIIFPTCGYA) are cleaved as a signal peptide. Residues 22-141 (AINTSSPLSI…VSGNKLWQSF (120 aa)) form the Bulb-type lectin domain. The Extracellular segment spans residues 22–428 (AINTSSPLSI…SELAGSSRRK (407 aa)). 5 N-linked (GlcNAc...) asparagine glycosylation sites follow: asparagine 24, asparagine 50, asparagine 85, asparagine 91, and asparagine 248. The EGF-like domain occupies 277-313 (PENPCDLYGRCGPYGLCVRSDPPKCECLKGFVPKSDE). Cystine bridges form between cysteine 281/cysteine 293 and cysteine 287/cysteine 301. Asparagine 319 and asparagine 378 each carry an N-linked (GlcNAc...) asparagine glycan. In terms of domain architecture, PAN spans 332–418 (CQAKSSMKTQ…GEFLFIRLAS (87 aa)). 2 disulfides stabilise this stretch: cysteine 371/cysteine 392 and cysteine 375/cysteine 381. Residues 429–449 (IIVGTTVSLSIFLILVFAAIM) form a helical membrane-spanning segment. Residues 450–805 (LWRYRAKQND…EMTESMIQGR (356 aa)) are Cytoplasmic-facing. The 286-residue stretch at 488–773 (FSPSNKLGQG…DLPVPKQPIF (286 aa)) folds into the Protein kinase domain. ATP is bound by residues 494 to 502 (LGQGGFGPV) and lysine 516. A phosphoserine mark is found at serine 522 and serine 537. The segment at 577 to 594 (CLKFELDWPKRFNIIQGI) is caM-binding. Residue tyrosine 600 is modified to Phosphotyrosine. The active-site Proton acceptor is the aspartate 613. Phosphoserine is present on residues serine 617 and serine 630. Threonine 647 is subject to Phosphothreonine. 2 positions are modified to phosphoserine: serine 690 and serine 793.

It belongs to the protein kinase superfamily. Ser/Thr protein kinase family. As to quaternary structure, interacts with PUB9, PUB13, PUB14, PUB29, PUB38, PUB44 and PUB45. Interacts with PBL34, PBL35 and PBL36. In terms of processing, autophosphorylated at Tyr-600. Autophosphorylation at Tyr-600 is required for downstream phosphorylation of the receptor-like cytoplasmic kinase PBL34, PBL35 and PBL36, and activation of plant immunity.

The protein localises to the cell membrane. It catalyses the reaction L-seryl-[protein] + ATP = O-phospho-L-seryl-[protein] + ADP + H(+). The catalysed reaction is L-threonyl-[protein] + ATP = O-phospho-L-threonyl-[protein] + ADP + H(+). It carries out the reaction L-tyrosyl-[protein] + ATP = O-phospho-L-tyrosyl-[protein] + ADP + H(+). S-domain receptor protein kinase involved in lipopolysaccharide (LPS) sensing. Specifically detects LPS of Pseudomonas and Xanthomonas species. LPS are major components of the outer membrane of Gram-negative bacteria and are important microbe-associated molecular patterns (MAMPs) that trigger biphasic production of reactive oxygen species (ROS) and immune responses in plants. Seems to be only partially associated with the second LPS-triggered ROS burst. Mediates defense signaling in response to the medium-chain 3-hydroxy fatty acid 3-OH-C10:0, a pathogen-associated molecular pattern (PAMP) which induces autophosphorylation at Tyr-600. Autophosphorylation at Tyr-600 is required for downstream phosphorylation of the receptor-like cytoplasmic kinase PBL34, PBL35 and PBL36, and activation of plant immunity. Its function is as follows. (Microbial infection) Targeted by the bacterial type III effector protein tyrosine phosphatase HopAO1 from Pseudomonas syringae. HopAO1 dephosphorylates Tyr-600, which suppresses the immune response. The polypeptide is G-type lectin S-receptor-like serine/threonine-protein kinase SD1-29 (Arabidopsis thaliana (Mouse-ear cress)).